Here is a 395-residue protein sequence, read N- to C-terminus: Chaperone protein DnaJ (395 aa).

The 66-residue stretch at 4–69 (DYYEVLGLSR…DKRRRYDQFG (66 aa)) folds into the J domain. The CR-type zinc finger occupies 151-232 (GVEKTLKIKK…CYGEGIKQGE (82 aa)). Cys-164, Cys-167, Cys-180, Cys-183, Cys-206, Cys-209, Cys-220, and Cys-223 together coordinate Zn(2+). CXXCXGXG motif repeat units follow at residues 164–171 (CTECNGTG), 180–187 (CPTCHGSG), 206–213 (CPTCGGEG), and 220–227 (CVSCYGEG).

It belongs to the DnaJ family. As to quaternary structure, homodimer. Zn(2+) serves as cofactor.

It localises to the cytoplasm. In terms of biological role, participates actively in the response to hyperosmotic and heat shock by preventing the aggregation of stress-denatured proteins and by disaggregating proteins, also in an autonomous, DnaK-independent fashion. Unfolded proteins bind initially to DnaJ; upon interaction with the DnaJ-bound protein, DnaK hydrolyzes its bound ATP, resulting in the formation of a stable complex. GrpE releases ADP from DnaK; ATP binding to DnaK triggers the release of the substrate protein, thus completing the reaction cycle. Several rounds of ATP-dependent interactions between DnaJ, DnaK and GrpE are required for fully efficient folding. Also involved, together with DnaK and GrpE, in the DNA replication of plasmids through activation of initiation proteins. The polypeptide is Chaperone protein DnaJ (Chlorobium phaeobacteroides (strain DSM 266 / SMG 266 / 2430)).